The primary structure comprises 275 residues: NH(3)-dependent NAD(+) synthetase (275 aa).

50–57 (GISGGVDS) is a binding site for ATP. Mg(2+) is bound at residue D56. R147 is a binding site for deamido-NAD(+). T167 is an ATP binding site. A Mg(2+)-binding site is contributed by E172. The deamido-NAD(+) site is built by K180 and D187. Residues K196 and T218 each contribute to the ATP site. Deamido-NAD(+) is bound at residue 267-268 (HK).

Belongs to the NAD synthetase family. In terms of assembly, homodimer.

The catalysed reaction is deamido-NAD(+) + NH4(+) + ATP = AMP + diphosphate + NAD(+) + H(+). It participates in cofactor biosynthesis; NAD(+) biosynthesis; NAD(+) from deamido-NAD(+) (ammonia route): step 1/1. Its function is as follows. Catalyzes the ATP-dependent amidation of deamido-NAD to form NAD. Uses ammonia as a nitrogen source. This chain is NH(3)-dependent NAD(+) synthetase, found in Pseudomonas aeruginosa (strain UCBPP-PA14).